Here is a 156-residue protein sequence, read N- to C-terminus: Lipoprotein signal peptidase (156 aa).

The next 2 helical transmembrane spans lie at 52–72 (ILEG…IGIV) and 85–105 (FATA…DRIF). Residues Asp111 and Asp129 contribute to the active site. Residues 121–141 (NFPIFNVADSALCVGVGILFL) form a helical membrane-spanning segment.

Belongs to the peptidase A8 family.

It is found in the cell membrane. It carries out the reaction Release of signal peptides from bacterial membrane prolipoproteins. Hydrolyzes -Xaa-Yaa-Zaa-|-(S,diacylglyceryl)Cys-, in which Xaa is hydrophobic (preferably Leu), and Yaa (Ala or Ser) and Zaa (Gly or Ala) have small, neutral side chains.. It participates in protein modification; lipoprotein biosynthesis (signal peptide cleavage). Its function is as follows. This protein specifically catalyzes the removal of signal peptides from prolipoproteins. The polypeptide is Lipoprotein signal peptidase (Halalkalibacterium halodurans (strain ATCC BAA-125 / DSM 18197 / FERM 7344 / JCM 9153 / C-125) (Bacillus halodurans)).